Reading from the N-terminus, the 405-residue chain is Dynactin subunit 2 (405 aa).

The interval 1–24 is disordered; sequence MADPKYADLPGIARNEPDVYETSD. Positions 101 to 134 form a coiled coil; sequence PQQKYQRLLHEIQELTQEVEKAQSTVKESAAEEK. Positions 186-207 are disordered; the sequence is AKTRKNPEGKSPAKGPGPDNEN. Residues 383–403 adopt a coiled-coil conformation; the sequence is KENLATVEDNFTSIDARIKKL.

The protein belongs to the dynactin subunit 2 family. Subunit of dynactin, a multiprotein complex part of a tripartite complex with dynein and a adapter, such as BICDL1, BICD2 or HOOK3. The dynactin complex is built around ACTR1A/ACTB filament and consists of an actin-related filament composed of a shoulder domain, a pointed end and a barbed end. Its length is defined by its flexible shoulder domain. The soulder is composed of 2 DCTN1 subunits, 4 DCTN2 and 2 DCTN3.

Its subcellular location is the cytoplasm. The protein localises to the cytoskeleton. It localises to the microtubule organizing center. The protein resides in the centrosome. It is found in the membrane. Part of the dynactin complex that activates the molecular motor dynein for ultra-processive transport along microtubules. In the dynactin soulder domain, binds the ACTR1A filament and acts as a molecular ruler to determine the length. Modulates cytoplasmic dynein binding to an organelle, and plays a role in prometaphase chromosome alignment and spindle organization during mitosis. Involved in anchoring microtubules to centrosomes. This is Dynactin subunit 2 (dctn2) from Xenopus tropicalis (Western clawed frog).